The following is a 501-amino-acid chain: Pyruvate kinase (501 aa).

Arginine 50 contacts substrate. Positions 52, 54, 85, and 86 each coordinate K(+). 52–55 provides a ligand contact to ATP; the sequence is NFSH. Residues arginine 92 and lysine 178 each coordinate ATP. Residue glutamate 243 coordinates Mg(2+). Positions 266, 267, and 299 each coordinate substrate. Residue aspartate 267 participates in Mg(2+) binding.

It belongs to the pyruvate kinase family. As to quaternary structure, homotetramer. The cofactor is Mg(2+). K(+) serves as cofactor.

The catalysed reaction is pyruvate + ATP = phosphoenolpyruvate + ADP + H(+). The protein operates within carbohydrate degradation; glycolysis; pyruvate from D-glyceraldehyde 3-phosphate: step 5/5. This Kluyveromyces lactis (strain ATCC 8585 / CBS 2359 / DSM 70799 / NBRC 1267 / NRRL Y-1140 / WM37) (Yeast) protein is Pyruvate kinase (PYK1).